The primary structure comprises 320 residues: Cytochrome f (320 aa).

An N-terminal signal peptide occupies residues 1–36 (MKHTNSKQKLKDIINFCQAIFTLCIICLYQANISNS). Residues Y37, C57, C60, and H61 each contribute to the heme site. A helical transmembrane segment spans residues 286–305 (LISFIFFSISVLISQLFFVL).

Belongs to the cytochrome f family. As to quaternary structure, the 4 large subunits of the cytochrome b6-f complex are cytochrome b6, subunit IV (17 kDa polypeptide, petD), cytochrome f and the Rieske protein, while the 4 small subunits are PetG, PetL, PetM and PetN. The complex functions as a dimer. Heme serves as cofactor.

It localises to the plastid. The protein localises to the chloroplast thylakoid membrane. Its function is as follows. Component of the cytochrome b6-f complex, which mediates electron transfer between photosystem II (PSII) and photosystem I (PSI), cyclic electron flow around PSI, and state transitions. The protein is Cytochrome f (petA) of Cyanidium caldarium (Red alga).